Consider the following 378-residue polypeptide: uncharacterized protein (378 aa).

Residues 1–11 show a composition bias toward polar residues; it reads MSQQTTPAEQK. The tract at residues 1–33 is disordered; the sequence is MSQQTTPAEQKSLQRKKPPFRADQVGSLLRSEP.

The protein to B.subtilis YxjH.

This is an uncharacterized protein from Bacillus subtilis (strain 168).